The chain runs to 539 residues: MAAALRVAAVGARLSVLASGLRAAVRSLCSQATSVNERIENKRRTALLGGGQRRIDAQHKRGKLTARERISLLLDPGSFVESDMFVEHRCADFGMAADKNKFPGDSVVTGRGRINGRLVYVFSQDFTVFGGSLSGAHAQKICKIMDQAITVGAPVIGLNDSGGARIQEGVESLAGYADIFLRNVTASGVIPQISLIMGPCAGGAVYSPALTDFTFMVKDTSYLFITGPDVVKSVTNEDVTQEELGGAKTHTTMSGVAHRAFENDVDALCNLRDFFNYLPLSSQDPAPVRECHDPSDRLVPELDTIVPLESTKAYNMVDIIHSVVDEREFFEIMPNYAKNIIVGFARMNGRTVGIVGNQPKVASGCLDINSSVKGARFVRFCDAFNIPLITFVDVPGFLPGTAQEYGGIIRHGAKLLYAFAEATVPKVTVITRKAYGGAYDVMSSKHLCGDTNYAWPTAEIAVMGAKGAVEIIFKGHENVEAAQAEYIEKFANPFPAAVRGFVDDIIQPSSTRARICCDLDVLASKKVQRPWRKHANIPL.

Residues 1–28 (MAAALRVAAVGARLSVLASGLRAAVRSL) constitute a mitochondrion transit peptide. The CoA carboxyltransferase N-terminal domain maps to 32 to 290 (ATSVNERIEN…SSQDPAPVRE (259 aa)). The interval 32–533 (ATSVNERIEN…SKKVQRPWRK (502 aa)) is carboxyltransferase. Position 71 is a phosphoserine (Ser71). The residue at position 99 (Lys99) is an N6-acetyllysine; alternate. At Lys99 the chain carries N6-succinyllysine; alternate. Lys248 is modified (N6-succinyllysine). Residues 294–533 (PSDRLVPELD…SKKVQRPWRK (240 aa)) enclose the CoA carboxyltransferase C-terminal domain. An acyl-CoA binding region spans residues 325-358 (DEREFFEIMPNYAKNIIVGFARMNGRTVGIVGNQ). N6-acetyllysine; alternate occurs at positions 474 and 489. An N6-succinyllysine; alternate mark is found at Lys474 and Lys489.

The protein belongs to the AccD/PCCB family. In terms of assembly, the holoenzyme is a dodecamer composed of 6 PCCA/alpha subunits and 6 PCCB/beta subunits.

It is found in the mitochondrion matrix. It carries out the reaction propanoyl-CoA + hydrogencarbonate + ATP = (S)-methylmalonyl-CoA + ADP + phosphate + H(+). It catalyses the reaction butanoyl-CoA + hydrogencarbonate + ATP = (2S)-ethylmalonyl-CoA + ADP + phosphate + H(+). Its pathway is metabolic intermediate metabolism; propanoyl-CoA degradation; succinyl-CoA from propanoyl-CoA: step 1/3. Its function is as follows. This is one of the 2 subunits of the biotin-dependent propionyl-CoA carboxylase (PCC), a mitochondrial enzyme involved in the catabolism of odd chain fatty acids, branched-chain amino acids isoleucine, threonine, methionine, and valine and other metabolites. Propionyl-CoA carboxylase catalyzes the carboxylation of propionyl-CoA/propanoyl-CoA to D-methylmalonyl-CoA/(S)-methylmalonyl-CoA. Within the holoenzyme, the alpha subunit catalyzes the ATP-dependent carboxylation of the biotin carried by the biotin carboxyl carrier (BCC) domain, while the beta subunit then transfers the carboxyl group from carboxylated biotin to propionyl-CoA. Propionyl-CoA carboxylase also significantly acts on butyryl-CoA/butanoyl-CoA, which is converted to ethylmalonyl-CoA/(2S)-ethylmalonyl-CoA at a much lower rate. Other alternative minor substrates include (2E)-butenoyl-CoA/crotonoyl-CoA. The sequence is that of Propionyl-CoA carboxylase beta chain, mitochondrial from Homo sapiens (Human).